The following is a 169-amino-acid chain: Small ribosomal subunit protein uS5 (169 aa).

The S5 DRBM domain occupies 14-77 (MKEQVVDIRR…QAAKKNLLLV (64 aa)).

The protein belongs to the universal ribosomal protein uS5 family. Part of the 30S ribosomal subunit. Contacts proteins S4 and S8.

In terms of biological role, with S4 and S12 plays an important role in translational accuracy. Located at the back of the 30S subunit body where it stabilizes the conformation of the head with respect to the body. This Alkaliphilus metalliredigens (strain QYMF) protein is Small ribosomal subunit protein uS5.